The following is a 553-amino-acid chain: Solute carrier family 2, facilitated glucose transporter member 10 (553 aa).

Topologically, residues 1-15 (MGLRSTTLVLAATSS) are cytoplasmic. The helical transmembrane segment at 16–36 (LLGGLIFGYELGIISGALLML) threads the bilayer. Over 37 to 48 (KTVFQLTCFEQE) the chain is Extracellular. A helical membrane pass occupies residues 49–69 (ALVSAVLFGALLASLIGGFII). Over 70-82 (DRSGRRTSIMGSN) the chain is Cytoplasmic. A helical membrane pass occupies residues 83-103 (LVVLAGSIILIATSSFWWLVV). Residues 104-105 (GR) lie on the Extracellular side of the membrane. The helical transmembrane segment at 106–126 (VTVGFAISISSMACCIYVSEI) threads the bilayer. Over 127 to 132 (VRPHQR) the chain is Cytoplasmic. A helical transmembrane segment spans residues 133-153 (GTLVSLYETGITVGILISYAM). Residues 154-165 (NYFLSAVNDGWK) lie on the Extracellular side of the membrane. Residues 166 to 186 (YMFGLAIIPAAFQFIVILFLP) traverse the membrane as a helical segment. Residues 187 to 240 (SKPHTLNFWEQDSDNGFIELEEAGESGEFKPDTYDKQYTFLDLFRSKDNMRTRT) lie on the Cytoplasmic side of the membrane. Residues 241–261 (LLGLGLVLFQQFTGQPNVLYY) form a helical membrane-spanning segment. 250–251 (QQ) is a binding site for D-glucose. Residues 262–277 (ASTIFRSVGFQSNSSA) are Extracellular-facing. Residue asparagine 274 is glycosylated (N-linked (GlcNAc...) asparagine). Residues 278–298 (VLASVGLGVVKVASTLIAICF) form a helical membrane-spanning segment. The Cytoplasmic segment spans residues 299–305 (ADKAGRR). The helical transmembrane segment at 306 to 326 (ILLLAGCIVMTIAISGIGIVS) threads the bilayer. The Extracellular portion of the chain corresponds to 327 to 413 (FMVELDSHRD…PPAGPDSNYA (87 aa)). N-linked (GlcNAc...) asparagine glycans are attached at residues asparagine 344, asparagine 351, and asparagine 400. A helical membrane pass occupies residues 414 to 434 (ILNWITLLSMMAFVSAFSIGF). Topologically, residues 435-462 (GPMTWLVLSEIYPADIRGRAFAFCNSFN) are cytoplasmic. A D-glucose-binding site is contributed by tryptophan 439. A helical transmembrane segment spans residues 463–482 (WAANLLITLTFLEVIGSIGL). A topological domain (extracellular) is located at residue glycine 483. The chain crosses the membrane as a helical span at residues 484 to 504 (WTFLLYGGVGLLAIAFIYFFI). The Cytoplasmic portion of the chain corresponds to 505–553 (PETKGQSLEEIDQQLSSKRISKRRETSKGVRKRPSTGPPYQRVGKSNWT). Residues 522–553 (KRISKRRETSKGVRKRPSTGPPYQRVGKSNWT) form a disordered region.

The protein belongs to the major facilitator superfamily. Sugar transporter (TC 2.A.1.1) family. Glucose transporter subfamily.

The protein resides in the endomembrane system. It localises to the cytoplasm. The protein localises to the perinuclear region. The enzyme catalyses D-glucose(out) = D-glucose(in). Facilitative glucose transporter required for the development of the cardiovascular system. The polypeptide is Solute carrier family 2, facilitated glucose transporter member 10 (Xenopus laevis (African clawed frog)).